The primary structure comprises 291 residues: MIKGILLSLSASVLFGYLYYFSTLLQPLGGEDIFGFRIIFTLPFVIAAVFLFKQKQAVGQYFVRIKQQPLLIFGFLFNSAMMGIQIWLFLWAPNNGSALSVSFGYLLLPLTMVLVGRLVFKEHISRVKFLAVVIAAIGVFSNILLKGGLSWEALLVSFGYSTYFATRKILKINDLAGFCLEMSLLLPVCIYFAWQVDLQAVQQANENILLLLVLLGLISGVALNTYIVASSLLPINVLGLLGYAEPIMMLFVSFLIGEQLDSETIPLFICLMISMILFMSEGLVRLKRRYK.

10 helical membrane passes run 5–23 (ILLSLSASVLFGYLYYFST), 33–52 (IFGFRIIFTLPFVIAAVFLF), 69–91 (PLLIFGFLFNSAMMGIQIWLFLW), 101–120 (VSFGYLLLPLTMVLVGRLVF), 127–144 (VKFLAVVIAAIGVFSNIL), 148–165 (GLSWEALLVSFGYSTYFA), 172–194 (INDLAGFCLEMSLLLPVCIYFAW), 209–228 (LLLLVLLGLISGVALNTYIV), 235–257 (INVLGLLGYAEPIMMLFVSFLIG), and 262–284 (SETIPLFICLMISMILFMSEGLV).

It belongs to the EamA transporter family.

The protein localises to the cell membrane. This is an uncharacterized protein from Pasteurella multocida (strain Pm70).